Reading from the N-terminus, the 651-residue chain is Peptide-N(4)-(N-acetyl-beta-glucosaminyl)asparagine amidase (651 aa).

Ala2 bears the N-acetylalanine mark. The 62-residue stretch at 30-91 (EASKLLLTYA…EGETHLIFPK (62 aa)) folds into the PUB domain. The segment at 116 to 153 (SSQKVEFSQHPAAVRLPAEQPEDPTGLMQHSGNQPGQP) is disordered. Residues 143 to 152 (MQHSGNQPGQ) are compositionally biased toward polar residues. Residues Cys247, Cys250, Cys280, and Cys283 each contribute to the Zn(2+) site. Cys306 functions as the Nucleophile in the catalytic mechanism. Residues His333 and Asp350 contribute to the active site. Positions 451-651 (ELGGRVSGSL…LEIIITFSDL (201 aa)) constitute a PAW domain.

This sequence belongs to the transglutaminase-like superfamily. PNGase family. As to quaternary structure, component of a complex required to couple retrotranslocation, ubiquitination and deglycosylation composed of NGLY1, SAKS1, AMFR, VCP and RAD23B. Interacts with the proteasome components RAD23B and PSMC1. Interacts with directly with VCP. Interacts with DERL1, bringing it close to the endoplasmic reticulum membrane. Interacts with SAKS1. Zn(2+) is required as a cofactor.

The protein resides in the cytoplasm. The enzyme catalyses Hydrolysis of an N(4)-(acetyl-beta-D-glucosaminyl)asparagine residue in which the glucosamine residue may be further glycosylated, to yield a (substituted) N-acetyl-beta-D-glucosaminylamine and a peptide containing an aspartate residue.. With respect to regulation, inhibited by Z-VAD-fmk, a well-known caspase inhibitor, which inhibits enzyme activity through covalent binding of the carbohydrate to the single Cys-306 residue. Its function is as follows. Specifically deglycosylates the denatured form of N-linked glycoproteins in the cytoplasm and assists their proteasome-mediated degradation. Cleaves the beta-aspartyl-glucosamine (GlcNAc) of the glycan and the amide side chain of Asn, converting Asn to Asp. Prefers proteins containing high-mannose over those bearing complex type oligosaccharides. Can recognize misfolded proteins in the endoplasmic reticulum that are exported to the cytosol to be destroyed and deglycosylate them, while it has no activity toward native proteins. Deglycosylation is a prerequisite for subsequent proteasome-mediated degradation of some, but not all, misfolded glycoproteins. The sequence is that of Peptide-N(4)-(N-acetyl-beta-glucosaminyl)asparagine amidase (Ngly1) from Rattus norvegicus (Rat).